Reading from the N-terminus, the 136-residue chain is MTRKIVDLARSCGILYLMLFIGEWIAHHLNIGIPASIWGLLLLFLGLTFRIIKLDWVLCSASLLIRYMALLFVPVSVGVIKYADVLFSQMNVLLLPNIVSTFLTLIVVGLLSDYLFSLSSFSHLRKKVARKQAEKA.

Helical transmembrane passes span 5–25 (IVDL…GEWI), 29–49 (LNIG…GLTF), 67–87 (YMAL…DVLF), and 92–112 (VLLL…GLLS).

It belongs to the UPF0299 family.

The protein resides in the cell inner membrane. The polypeptide is UPF0299 membrane protein PM0880 (Pasteurella multocida (strain Pm70)).